Consider the following 733-residue polypeptide: Hexamerin (733 aa).

An N-terminal signal peptide occupies residues 1-17 (MKTALVLILATATLAVA). N-linked (GlcNAc...) asparagine glycosylation is found at Asn199, Asn234, and Asn431.

The protein belongs to the hemocyanin family. As to quaternary structure, homohexamer.

The protein localises to the secreted. Its subcellular location is the extracellular space. Functionally, larval storage protein (LSP) which may serve as a store of amino acids for synthesis of adult proteins. This chain is Hexamerin, found in Blaberus discoidalis (Tropical cockroach).